An 83-amino-acid chain; its full sequence is Mu-theraphotoxin-Hhn2m (83 aa).

The first 21 residues, 1–21 (MKASMFLALAGLVLLFVVGYA), serve as a signal peptide directing secretion. A propeptide spanning residues 22 to 48 (SESEEKEFPIELLSKIFAVDVFKGEER) is cleaved from the precursor. Intrachain disulfides connect C50–C65, C57–C70, and C64–C77. At L81 the chain carries Leucine amide.

Belongs to the neurotoxin 10 (Hwtx-1) family. 15 (Hntx-3) subfamily. As to quaternary structure, monomer. As to expression, expressed by the venom gland.

The protein resides in the secreted. In terms of biological role, lethal neurotoxin. Selectively blocks tetrodotoxin-sensitive voltage-gated sodium channels (Nav). Does not affect tetrodotoxin-resistant voltage-gated sodium channels or calcium channels. This Cyriopagopus hainanus (Chinese bird spider) protein is Mu-theraphotoxin-Hhn2m.